Here is a 341-residue protein sequence, read N- to C-terminus: Geranylgeranyl pyrophosphate synthase penG (341 aa).

Positions 68, 71, and 100 each coordinate isopentenyl diphosphate. Mg(2+)-binding residues include aspartate 107 and aspartate 111. Arginine 116 is a binding site for dimethylallyl diphosphate. Arginine 117 lines the isopentenyl diphosphate pocket. Lysine 194, threonine 195, and glutamine 228 together coordinate dimethylallyl diphosphate. Aspartate 231 is a binding site for Mg(2+). Asparagine 235, lysine 245, and lysine 255 together coordinate dimethylallyl diphosphate.

This sequence belongs to the FPP/GGPP synthase family. Mg(2+) is required as a cofactor.

It catalyses the reaction isopentenyl diphosphate + dimethylallyl diphosphate = (2E)-geranyl diphosphate + diphosphate. The enzyme catalyses isopentenyl diphosphate + (2E)-geranyl diphosphate = (2E,6E)-farnesyl diphosphate + diphosphate. The catalysed reaction is isopentenyl diphosphate + (2E,6E)-farnesyl diphosphate = (2E,6E,10E)-geranylgeranyl diphosphate + diphosphate. It participates in secondary metabolite biosynthesis. In terms of biological role, geranylgeranyl pyrophosphate synthase; part of the gene cluster that mediates the biosynthesis of the indole diterpenes penitrems. The geranylgeranyl diphosphate (GGPP) synthase penG catalyzes the first step in penitrem biosynthesis via conversion of farnesyl pyrophosphate and isopentyl pyrophosphate into geranylgeranyl pyrophosphate (GGPP). Condensation of indole-3-glycerol phosphate with GGPP by the prenyl transferase penC then forms 3-geranylgeranylindole (3-GGI). Epoxidation by the FAD-dependent monooxygenase penM leads to a epoxidized-GGI that is substrate of the terpene cyclase penB for cyclization to yield paspaline. Paspaline is subsequently converted to 13-desoxypaxilline by the cytochrome P450 monooxygenase penP, the latter being then converted to paxilline by the cytochrome P450 monooxygenase penQ. Paxilline is converted to beta-paxitriol via C-10 ketoreduction by the short-chain dehydrogenase PC-15 which can be monoprenylated at the C-20 by the indole diterpene prenyltransferase penD. A two-step elimination (acetylation and elimination) process performed by the O-acetyltransferase PC-16 and the P.simplicissimum ptmI-ortholog not yet identified in P.crustosum, leads to the production of the prenylated form of penijanthine. The FAD-linked oxidoreductase ptmO then converts the prenylated form of penijanthine into PC-M5 which is in turn transformed into PC-M4 by the aromatic dimethylallyltransferase PC-22. A series of oxidation steps involving 4 cytochrome P450 monooxygenases (PC-21, PC-05, PC-23, PC-20) and a FAD-dependent monooxygenase (PC-14) are required for the transformation of PC-M4 to penitrems A and E. Synthesis of these final products is proposed to proceed via penitrems D and C (PC-21, PC-05, PC-14) and penitrems B and F (PC-21, PC-05, PC-14, PC-23). In Penicillium crustosum (Blue mold fungus), this protein is Geranylgeranyl pyrophosphate synthase penG.